We begin with the raw amino-acid sequence, 1346 residues long: Zinc finger protein 541 (1346 aa).

Disordered regions lie at residues 1 to 34 (MDQY…DTLN) and 113 to 136 (EADE…SSPQ). Polar residues predominate over residues 21–32 (FSESQGLNCSDT). 3 consecutive C2H2-type zinc fingers follow at residues 140-162 (LDCS…YLTH), 168-190 (HVCK…MLTH), and 196-220 (FVCI…YEVH). 4 disordered regions span residues 235-271 (ACGD…LLPH), 283-328 (VHQK…AAPA), 437-472 (SAVP…EDAL), and 578-744 (SQLP…GGYR). Composition is skewed to low complexity over residues 294–323 (PAGA…PAGP) and 440–458 (PSRE…SPSE). Residues 671 to 685 (PDISSLAKQLRSSKG) are compositionally biased toward polar residues. The C2H2-type 4 zinc finger occupies 838-860 (FVCKNCSQMFYTEKGLSSHMCFH). The segment at 931-971 (AMGQEKDGEERDSKESSQQRKRKKRPPPSTAGEPGPAGCHQ) is disordered. Residues 934-948 (QEKDGEERDSKESSQ) show a composition bias toward basic and acidic residues. The ELM2 domain occupies 1053-1145 (PHINIGSRFQ…VALETLLLRG (93 aa)). Positions 1160-1211 (TGSDVWTPIEKRLFKKAFYAHKKDFYLIHKMIQTKTVAQCVEYYYIWKKMIK) constitute an SANT domain. A disordered region spans residues 1224 to 1281 (VKREPEEVERTEEKVPCSPRERPSHHPTPKLKTKSYRRESILSSSPNAGSKRTPELLG). The segment covering 1234-1247 (TEEKVPCSPRERPS) has biased composition (basic and acidic residues). Over residues 1248 to 1258 (HHPTPKLKTKS) the composition is skewed to basic residues. Polar residues predominate over residues 1264-1273 (ILSSSPNAGS). The C2H2-type 5 zinc-finger motif lies at 1289 to 1311 (FPCRECERVFDKIKSRNAHMKRH).

Interacts with DNTTIP1. Identified in a complex with KCDT19, HDAC1 and HSPA2. Component of a histone deacetylase complex containing DNTTIP1, ZNF541, HDAC1 and HDAC2. Identified in a complex with HDAC1, HDAC2, DNTTIP1 and KCTD19.

It localises to the nucleus. Functionally, transcription regulator which is essential for male fertility and for the completion of meiotic prophase in spermatocytes. Regulates progression of the pachytene stage of meiotic prophase by activating the expression of genes involved in meiosis during spermatogenesis. Maintains the repression of pre-pachytene transcriptional programs, including meiotic double-strand breaks (DSB) formation genes in pachytene spermatocytes and suppresses aberrant DSB formation after mid-pachytene, thus ensuring meiosis progression. The protein is Zinc finger protein 541 (ZNF541) of Homo sapiens (Human).